The following is a 196-amino-acid chain: ATP-dependent Clp protease proteolytic subunit (196 aa).

The active-site Nucleophile is the serine 101. Histidine 126 is an active-site residue.

This sequence belongs to the peptidase S14 family. In terms of assembly, component of the chloroplastic Clp protease core complex.

Its subcellular location is the plastid. It is found in the chloroplast stroma. The enzyme catalyses Hydrolysis of proteins to small peptides in the presence of ATP and magnesium. alpha-casein is the usual test substrate. In the absence of ATP, only oligopeptides shorter than five residues are hydrolyzed (such as succinyl-Leu-Tyr-|-NHMec, and Leu-Tyr-Leu-|-Tyr-Trp, in which cleavage of the -Tyr-|-Leu- and -Tyr-|-Trp bonds also occurs).. Functionally, cleaves peptides in various proteins in a process that requires ATP hydrolysis. Has a chymotrypsin-like activity. Plays a major role in the degradation of misfolded proteins. The sequence is that of ATP-dependent Clp protease proteolytic subunit from Populus trichocarpa (Western balsam poplar).